A 429-amino-acid polypeptide reads, in one-letter code: MTAITNIAAREILDSRGNPTVEVDVLLEDGSFGRAAVPSGASTGAHEAVELRDGDKGRYNGKGVLKAVDAVQTEILDAIGGMDAEDQVAVDEAMITLDGTPNKARLGANAILGVSLAVAKAAAETAGLPLYRYVGGVQGRVLPVPMMNIVNGGAHADNPIDFQEFMVMPVGATSLSDAVRMGAEIFHTLKSALKKAGHNTNVGDEGGFAPNLPSAEAALDFVMESINAAGFKPGSDVVLALDCAATEFFKDGAYHYEGEGQTRSIEQQVEYLAKLTEAYPILSIEDGMSEDDWEGWKLLTDRIGNRVQLVGDDLFVTNVERLARGIETGTGNSILVKVNQIGSLTETLAAVDMAQRAGYTAVMSHRSGETEDSTIADLAVATNCGQIKTGSLARSDRLAKYNQLIRIEEGLGAQALYAGRSAIRQLAGR.

Gln163 provides a ligand contact to (2R)-2-phosphoglycerate. The active-site Proton donor is Glu205. Mg(2+) is bound by residues Asp242, Glu285, and Asp312. (2R)-2-phosphoglycerate contacts are provided by Lys337, Arg366, Ser367, and Lys388. Lys337 (proton acceptor) is an active-site residue.

This sequence belongs to the enolase family. It depends on Mg(2+) as a cofactor.

It is found in the cytoplasm. The protein localises to the secreted. Its subcellular location is the cell surface. The catalysed reaction is (2R)-2-phosphoglycerate = phosphoenolpyruvate + H2O. Its pathway is carbohydrate degradation; glycolysis; pyruvate from D-glyceraldehyde 3-phosphate: step 4/5. Catalyzes the reversible conversion of 2-phosphoglycerate (2-PG) into phosphoenolpyruvate (PEP). It is essential for the degradation of carbohydrates via glycolysis. This Methylorubrum populi (strain ATCC BAA-705 / NCIMB 13946 / BJ001) (Methylobacterium populi) protein is Enolase.